A 105-amino-acid chain; its full sequence is MTKSELISKLAERFPQLLAKDAELVVKIILDAMAKSLSRGERIEIRGFGSFDLNYRPSRVGRNPKSGEKVHVPEKYVPHFKAGKKMRELIDSGPKQHKVLDRVTG.

This sequence belongs to the bacterial histone-like protein family. In terms of assembly, heterodimer of an alpha and a beta chain.

This protein is one of the two subunits of integration host factor, a specific DNA-binding protein that functions in genetic recombination as well as in transcriptional and translational control. The chain is Integration host factor subunit beta from Nitrosomonas europaea (strain ATCC 19718 / CIP 103999 / KCTC 2705 / NBRC 14298).